The following is a 512-amino-acid chain: Cytochrome P450 76C1 (512 aa).

Residues Ile3–Phe23 form a helical membrane-spanning segment. A heme-binding site is contributed by Cys450.

It belongs to the cytochrome P450 family. It depends on heme as a cofactor.

It is found in the membrane. The polypeptide is Cytochrome P450 76C1 (CYP76C1) (Arabidopsis thaliana (Mouse-ear cress)).